A 459-amino-acid polypeptide reads, in one-letter code: Putrescine aminotransferase (459 aa).

Pyridoxal 5'-phosphate-binding positions include 150–151 (GT) and Q274. K300 carries the post-translational modification N6-(pyridoxal phosphate)lysine. Residue T332 participates in pyridoxal 5'-phosphate binding.

The protein belongs to the class-III pyridoxal-phosphate-dependent aminotransferase family. Putrescine aminotransferase subfamily. It depends on pyridoxal 5'-phosphate as a cofactor.

It carries out the reaction an alkane-alpha,omega-diamine + 2-oxoglutarate = an omega-aminoaldehyde + L-glutamate. The catalysed reaction is putrescine + 2-oxoglutarate = 1-pyrroline + L-glutamate + H2O. The enzyme catalyses cadaverine + 2-oxoglutarate = 5-aminopentanal + L-glutamate. It participates in amine and polyamine degradation; putrescine degradation; 4-aminobutanal from putrescine (transaminase route): step 1/1. In terms of biological role, catalyzes the aminotransferase reaction from putrescine to 2-oxoglutarate, leading to glutamate and 4-aminobutanal, which spontaneously cyclizes to form 1-pyrroline. This is the first step in one of two pathways for putrescine degradation, where putrescine is converted into 4-aminobutanoate (gamma-aminobutyrate or GABA) via 4-aminobutanal. Also functions as a cadaverine transaminase in a a L-lysine degradation pathway to succinate that proceeds via cadaverine, glutarate and L-2-hydroxyglutarate. The sequence is that of Putrescine aminotransferase from Escherichia fergusonii (strain ATCC 35469 / DSM 13698 / CCUG 18766 / IAM 14443 / JCM 21226 / LMG 7866 / NBRC 102419 / NCTC 12128 / CDC 0568-73).